A 445-amino-acid chain; its full sequence is Argininosuccinate synthase (445 aa).

ATP-binding positions include 18 to 26 and alanine 44; that span reads AFSGGLDTS. Tyrosine 100 contacts L-citrulline. ATP is bound by residues glycine 130 and threonine 132. L-aspartate is bound by residues threonine 132, asparagine 136, and aspartate 137. Asparagine 136 is a binding site for L-citrulline. Aspartate 137 serves as a coordination point for ATP. L-citrulline-binding residues include arginine 140 and serine 193. Aspartate 195 provides a ligand contact to ATP. Positions 202, 204, and 281 each coordinate L-citrulline.

It belongs to the argininosuccinate synthase family. Type 2 subfamily. In terms of assembly, homotetramer.

The protein resides in the cytoplasm. It carries out the reaction L-citrulline + L-aspartate + ATP = 2-(N(omega)-L-arginino)succinate + AMP + diphosphate + H(+). It participates in amino-acid biosynthesis; L-arginine biosynthesis; L-arginine from L-ornithine and carbamoyl phosphate: step 2/3. The chain is Argininosuccinate synthase (argG) from Pasteurella multocida (strain Pm70).